Reading from the N-terminus, the 752-residue chain is GTPase-activating protein rrc-1 (752 aa).

Residues 165-244 enclose the SH3 domain; that stretch reads PAIAAAVVTK…PRDCVMLIDD (80 aa). One can recognise a Rho-GAP domain in the interval 281-463; the sequence is LELTELFMRT…FCIENSDSLF (183 aa). Disordered regions lie at residues 523 to 552 and 582 to 609; these read STGELCGSPPSEVKWRSRSTRSHSTDATFQ and RSMRPTSRPPPSPRTRRARFSNGGGANN.

Functions as a GTPase-activating protein (GAP) for ced-10/RAC-1 and CDC42. The sequence is that of GTPase-activating protein rrc-1 from Caenorhabditis briggsae.